The primary structure comprises 1016 residues: C2 domain-containing protein 5 (1016 aa).

Residues 1–109 enclose the C2 domain; it reads MPGKLKVKIV…EAATVISGWF (109 aa). Ca(2+) is bound by residues D19, D26, D76, D78, S81, and D84. Position 197 is a phosphoserine; by PKB/AKT2 (S197). Residues S200 and S260 each carry the phosphoserine modification. Positions 265 to 330 are disordered; that stretch reads LKEIPFNEDP…SGSAGKEGGP (66 aa). Residues 274-289 show a composition bias toward polar residues; the sequence is PNPNTHSSGPSTPLKN. Residues 290-318 show a composition bias toward low complexity; the sequence is QTYSFSPSKSYSRQSSSSDTDLSLTPKTG. Phosphoserine occurs at positions 293, 295, 304, 305, and 306. Residue T317 is modified to Phosphothreonine. Over residues 319-328 the composition is skewed to gly residues; that stretch reads MGSGSAGKEG. Phosphoserine is present on S323. The residue at position 601 (T601) is a Phosphothreonine. The segment at 636–668 is disordered; that stretch reads VSEEMIGSPIPEPRQRSRLLRSQSESSDEVTEL. Phosphoserine is present on residues S643, S657, S659, S661, and S662. T666 carries the phosphothreonine modification. Residues S671, S817, and S869 each carry the phosphoserine modification.

Ca(2+) serves as cofactor. Post-translationally, phosphorylated on Ser-197 by active myristoylated kinase AKT2; insulin-stimulated phosphorylation by AKT2 regulates SLC2A4/GLUT4 translocation into the plasma membrane. As to expression, expressed in liver, muscle and fat.

The protein resides in the cytoplasmic vesicle membrane. The protein localises to the cytoplasm. It is found in the cell cortex. It localises to the cell membrane. Its subcellular location is the cell projection. The protein resides in the ruffle. Its function is as follows. Required for insulin-stimulated glucose transport and glucose transporter SLC2A4/GLUT4 translocation from intracellular glucose storage vesicle (GSV) to the plasma membrane (PM) in adipocytes. Binds phospholipid membranes in a calcium-dependent manner and is necessary for the optimal membrane fusion between SLC2A4/GLUT4 GSV and the PM. The protein is C2 domain-containing protein 5 (C2cd5) of Mus musculus (Mouse).